We begin with the raw amino-acid sequence, 363 residues long: Probable matrix metalloproteinase 095L (363 aa).

The signal sequence occupies residues 1–25; it reads MSVDSFTSRLAVVMTAVVLVWWAQA. The propeptide at 26–126 is activation peptide; the sequence is LPVPSPRRGE…PRCGVPDVSK (101 aa). A Cysteine switch motif is present at residues 117–124; sequence PRCGVPDV. The Zn(2+) site is built by Cys-119 and His-275. Residue Glu-276 is part of the active site. His-279 and His-285 together coordinate Zn(2+).

The protein belongs to the peptidase M10A family. Zn(2+) is required as a cofactor.

The protein localises to the secreted. Its function is as follows. Probable endopeptidase. The polypeptide is Probable matrix metalloproteinase 095L (Aedes vexans (Inland floodwater mosquito)).